A 913-amino-acid polypeptide reads, in one-letter code: DNA mismatch repair protein MutS (913 aa).

A disordered region spans residues 18–50 (NNKQKEKTKIPEDLSLEDLKKESQKRPRQRKNS). Residues 19–42 (NKQKEKTKIPEDLSLEDLKKESQK) are compositionally biased toward basic and acidic residues. ATP is bound at residue 720–727 (GPNASGKS).

It belongs to the DNA mismatch repair MutS family.

This protein is involved in the repair of mismatches in DNA. It is possible that it carries out the mismatch recognition step. This protein has a weak ATPase activity. The polypeptide is DNA mismatch repair protein MutS (Prochlorococcus marinus (strain MIT 9301)).